Here is a 271-residue protein sequence, read N- to C-terminus: Cyclic AMP-dependent transcription factor ATF-1 (271 aa).

Residues 1–61 (MEDSHKSTTS…QKAHGILARR (61 aa)) are disordered. Residues 31 to 90 (QVSSLSESEESQDSSDSIGSSQKAHGILARRPSYRKILKDLSSEDTRGRKGDGENSGVSA) enclose the KID domain. S63 is subject to Phosphoserine; by CaMK1, CDK3, RPS6KA4 and RPS6KA5. S198 bears the Phosphoserine; by HIPK2 mark. Glycyl lysine isopeptide (Lys-Gly) (interchain with G-Cter in SUMO2) cross-links involve residues K208 and K215. The 59-residue stretch at 213 to 271 (QLKREIRLMKNREAARECRRKKKEYVKCLENRVAVLENQNKTLIEELKTLKDLYSNKSV) folds into the bZIP domain. Residues 215 to 239 (KREIRLMKNREAARECRRKKKEYVK) form a basic motif region. The leucine-zipper stretch occupies residues 241-262 (LENRVAVLENQNKTLIEELKTL).

Belongs to the bZIP family. ATF subfamily. As to quaternary structure, binds DNA as a dimer. Interacts with HIPK2 and CDK3. Interacts with MOTS-c, a peptide produced by the mitochondrially encoded 12S rRNA MT-RNR1; the interaction occurs in the nucleus following metabolic stress. Post-translationally, phosphorylated at Ser-198 by HIPK2 in response to genotoxic stress. This phosphorylation promotes transcription repression of FTH1 and other antioxidant detoxification genes. The CDK3-mediated phosphorylation at Ser-63 promotes its transactivation and transcriptional activities. Phosphorylated at Ser-63 by RPS6KA4 and RPS6KA5 in response to mitogenic or stress stimuli.

It is found in the nucleus. Functionally, this protein binds the cAMP response element (CRE) (consensus: 5'-GTGACGT[AC][AG]-3'), a sequence present in many viral and cellular promoters. Binds to the Tax-responsive element (TRE) of HTLV-I. Mediates PKA-induced stimulation of CRE-reporter genes. Represses the expression of FTH1 and other antioxidant detoxification genes. Triggers cell proliferation and transformation. The polypeptide is Cyclic AMP-dependent transcription factor ATF-1 (ATF1) (Homo sapiens (Human)).